Reading from the N-terminus, the 576-residue chain is Arginine--tRNA ligase (576 aa).

The 'HIGH' region motif lies at 126 to 136; the sequence is ANPTGPMHIGH.

The protein belongs to the class-I aminoacyl-tRNA synthetase family. In terms of assembly, monomer.

It localises to the cytoplasm. It carries out the reaction tRNA(Arg) + L-arginine + ATP = L-arginyl-tRNA(Arg) + AMP + diphosphate. The sequence is that of Arginine--tRNA ligase from Rickettsia africae (strain ESF-5).